Here is a 78-residue protein sequence, read N- to C-terminus: Small ribosomal subunit protein bS20 (78 aa).

Belongs to the bacterial ribosomal protein bS20 family.

Functionally, binds directly to 16S ribosomal RNA. This Streptococcus pneumoniae serotype 19F (strain G54) protein is Small ribosomal subunit protein bS20.